The sequence spans 176 residues: ATP-dependent protease subunit HslV (176 aa).

T2 is a catalytic residue. Na(+) is bound by residues G157, C160, and T163.

It belongs to the peptidase T1B family. HslV subfamily. A double ring-shaped homohexamer of HslV is capped on each side by a ring-shaped HslU homohexamer. The assembly of the HslU/HslV complex is dependent on binding of ATP.

It localises to the cytoplasm. The enzyme catalyses ATP-dependent cleavage of peptide bonds with broad specificity.. Its activity is regulated as follows. Allosterically activated by HslU binding. Its function is as follows. Protease subunit of a proteasome-like degradation complex believed to be a general protein degrading machinery. The protein is ATP-dependent protease subunit HslV of Ectopseudomonas mendocina (strain ymp) (Pseudomonas mendocina).